A 2560-amino-acid chain; its full sequence is Plipastatin synthase subunit B (2560 aa).

The segment at 7-310 is condensation 1; sequence IQDIYPLSHM…NTVPVRIRSA (304 aa). Residues 7–1042 form a domain 1 (tyrosine-activating) region; sequence IQDIYPLSHM…AVKLMSLKEH (1036 aa). The adenylation 1 stretch occupies residues 496–889; it reads TYRQLQVRAN…QAPGVKEAAV (394 aa). A Carrier 1 domain is found at 965 to 1040; that stretch reads APRTLIEADL…SMAVKLMSLK (76 aa). Ser1000 bears the O-(pantetheine 4'-phosphoryl)serine mark. The interval 1052 to 1342 is condensation 2; the sequence is QRDVYPLSFS…NTLAMRSKPE (291 aa). The tract at residues 1052-2553 is domain 2 (D-allo-threonine-activating); that stretch reads QRDVYPLSFS…DLTLDELSEI (1502 aa). An adenylation 2 region spans residues 1527–1927; that stretch reads TYRDLNEKAE…QYPMIKEAAV (401 aa). A Carrier 2 domain is found at 2006-2080; the sequence is SPRNEIETVM…ELSARVRKDV (75 aa). Ser2041 carries the O-(pantetheine 4'-phosphoryl)serine modification. Residues 2088 to 2553 are epimerization; it reads VEGEITWTPI…DLTLDELSEI (466 aa).

The protein belongs to the ATP-dependent AMP-binding enzyme family. Requires pantetheine 4'-phosphate as cofactor.

Functionally, this protein is a multifunctional enzyme, able to activate and polymerize the amino acids Tyr and Thr as part of the biosynthesis of the lipopeptide antibiotic plipastatin. The Thr residue is further converted to the D-allo-isomer form. The activation sites for these amino acids consist of individual domains. The polypeptide is Plipastatin synthase subunit B (ppsB) (Bacillus subtilis (strain 168)).